We begin with the raw amino-acid sequence, 446 residues long: Tubulin beta chain (446 aa).

GTP-binding residues include Q11, E69, S138, G142, T143, G144, N204, and N226. E69 contacts Mg(2+). The disordered stretch occupies residues 421–446 (EYQQYQDAGIDEEEEEYEEELPEGEE). Residues 429–446 (GIDEEEEEYEEELPEGEE) are compositionally biased toward acidic residues.

Belongs to the tubulin family. As to quaternary structure, dimer of alpha and beta chains. A typical microtubule is a hollow water-filled tube with an outer diameter of 25 nm and an inner diameter of 15 nM. Alpha-beta heterodimers associate head-to-tail to form protofilaments running lengthwise along the microtubule wall with the beta-tubulin subunit facing the microtubule plus end conferring a structural polarity. Microtubules usually have 13 protofilaments but different protofilament numbers can be found in some organisms and specialized cells. Mg(2+) serves as cofactor.

Its subcellular location is the cytoplasm. The protein resides in the cytoskeleton. In terms of biological role, tubulin is the major constituent of microtubules, a cylinder consisting of laterally associated linear protofilaments composed of alpha- and beta-tubulin heterodimers. Microtubules grow by the addition of GTP-tubulin dimers to the microtubule end, where a stabilizing cap forms. Below the cap, tubulin dimers are in GDP-bound state, owing to GTPase activity of alpha-tubulin. The polypeptide is Tubulin beta chain (TUB2) (Fusarium fujikuroi (Bakanae and foot rot disease fungus)).